The sequence spans 374 residues: DNA replication and repair protein RecF (374 aa).

Residue 30–37 (GPNAQGKS) participates in ATP binding.

This sequence belongs to the RecF family.

The protein resides in the cytoplasm. In terms of biological role, the RecF protein is involved in DNA metabolism; it is required for DNA replication and normal SOS inducibility. RecF binds preferentially to single-stranded, linear DNA. It also seems to bind ATP. This chain is DNA replication and repair protein RecF, found in Acaryochloris marina (strain MBIC 11017).